Consider the following 541-residue polypeptide: Carboxypeptidase Y homolog A (541 aa).

A signal peptide spans Met1 to Ala17. A propeptide spanning residues Gln18–Lys122 is cleaved from the precursor. 5 disulfide bridges follow: Cys177-Cys417, Cys311-Cys325, Cys335-Cys358, Cys342-Cys351, and Cys380-Cys387. A glycan (N-linked (GlcNAc...) asparagine) is linked at Asn208. The active site involves Ser264. Residue Asp456 is part of the active site. The N-linked (GlcNAc...) asparagine glycan is linked to Asn507. His518 is a catalytic residue.

It belongs to the peptidase S10 family.

It is found in the vacuole. It catalyses the reaction Release of a C-terminal amino acid with broad specificity.. Functionally, vacuolar carboxypeptidase involved in degradation of small peptides. Digests preferentially peptides containing an aliphatic or hydrophobic residue in P1' position, as well as methionine, leucine or phenylalanine in P1 position of ester substrate. The polypeptide is Carboxypeptidase Y homolog A (CPYA) (Arthroderma otae (strain ATCC MYA-4605 / CBS 113480) (Microsporum canis)).